The chain runs to 229 residues: Germin-like protein subfamily 1 member 7 (229 aa).

Positions 1–24 (MEGFLRFLVAKAILLALASSFVSC) are cleaved as a signal peptide. A disulfide bridge connects residues C34 and C50. Residues 64 to 215 (SGLNIAGNTI…AFQLDVNVVK (152 aa)) form the Cupin type-1 domain. N79 carries N-linked (GlcNAc...) asparagine glycosylation. Mn(2+) is bound by residues H112, H114, E119, and H161.

This sequence belongs to the germin family. Oligomer (believed to be a pentamer but probably hexamer).

It is found in the secreted. It localises to the extracellular space. The protein resides in the apoplast. May play a role in plant defense. Probably has no oxalate oxidase activity even if the active site is conserved. The sequence is that of Germin-like protein subfamily 1 member 7 from Arabidopsis thaliana (Mouse-ear cress).